We begin with the raw amino-acid sequence, 348 residues long: Inosamine-phosphate amidinotransferase 1 (348 aa).

Active-site residues include Asp-179 and His-227. Catalysis depends on Cys-332, which acts as the Amidino-cysteine intermediate.

This sequence belongs to the amidinotransferase family. In terms of assembly, homodimer.

It catalyses the reaction 1-amino-1-deoxy-scyllo-inositol 4-phosphate + L-arginine = 1-guanidino-1-deoxy-scyllo-inositol 4-phosphate + L-ornithine. The protein operates within antibiotic biosynthesis; streptomycin biosynthesis. Catalyzes two non-consecutive transamidination reactions. It converts scyllo-inosamine 4-phosphate into N-amidino-scyllo-inosamine 4-phosphate and N1-amidinostreptamine 6-phosphate into streptidine 6-phosphate. The sequence is that of Inosamine-phosphate amidinotransferase 1 (strB1) from Streptomyces glaucescens.